The chain runs to 428 residues: Putative ankyrin repeat protein FPV234 (428 aa).

ANK repeat units follow at residues 6–35 (KDDILICEAIENYDSESLRNILENGADPNV), 39–68 (YQYSHLHNAIEKKNGSAVSLLLKHGADPNI), 71–100 (FFTPPLHKAIKKGCVDIARSLLEYGAIVNL), 103–132 (YCLKPIHIAANRTESKIVKLLIEYGADINS), 137–169 (NGKYPIHYAMKVYDPFRLKIIKVLLDHGADINK), 174–202 (TNTSPLYETRFITDDLLDYIISRGANINI), 206–238 (MGRNILHEIILRNGYNDFSNILVLIDHGADINA), and 242–271 (EGNTPFMLHTINNNAIILANYIVSLYYLSY).

This is Putative ankyrin repeat protein FPV234 from Fowlpox virus (strain NVSL) (FPV).